A 394-amino-acid chain; its full sequence is Upstream-binding factor 1-like protein 1 (394 aa).

A DNA-binding region (HMG box 1) is located at residues 101 to 169 (PKRPLTAYLR…DFQKKMRQFK (69 aa)). Positions 167–180 (QFKKRHPVSGHPKK) are enriched in basic residues. Positions 167–197 (QFKKRHPVSGHPKKSVVPQSHPTKVPTKSQG) are disordered. Over residues 183-197 (VPQSHPTKVPTKSQG) the composition is skewed to polar residues. Residues 225–291 (RKPPMNAYHK…QYRVKLDLWL (67 aa)) constitute a DNA-binding region (HMG box 2). The tract at residues 305–394 (AKATCGKRKN…SDSSSTDEDD (90 aa)) is disordered.

It is found in the cytoplasm. Its subcellular location is the nucleus. Essential for proliferation of the inner cell mass and trophectodermal cells in peri-implantation development. This chain is Upstream-binding factor 1-like protein 1, found in Mus musculus (Mouse).